A 352-amino-acid chain; its full sequence is N-acetyl-gamma-glutamyl-phosphate reductase (352 aa).

Residue Cys-155 is part of the active site.

The protein belongs to the NAGSA dehydrogenase family. Type 1 subfamily.

The protein resides in the cytoplasm. It catalyses the reaction N-acetyl-L-glutamate 5-semialdehyde + phosphate + NADP(+) = N-acetyl-L-glutamyl 5-phosphate + NADPH + H(+). The protein operates within amino-acid biosynthesis; L-arginine biosynthesis; N(2)-acetyl-L-ornithine from L-glutamate: step 3/4. Its function is as follows. Catalyzes the NADPH-dependent reduction of N-acetyl-5-glutamyl phosphate to yield N-acetyl-L-glutamate 5-semialdehyde. This chain is N-acetyl-gamma-glutamyl-phosphate reductase, found in Brachyspira hyodysenteriae (strain ATCC 49526 / WA1).